The sequence spans 85 residues: uncharacterized protein (85 aa).

This is an uncharacterized protein from Fowlpox virus (strain NVSL) (FPV).